A 429-amino-acid polypeptide reads, in one-letter code: 28S rRNA (cytosine-C(5))-methyltransferase (429 aa).

N-acetylglycine is present on glycine 2. The residue at position 167 (serine 167) is a Phosphoserine. S-adenosyl-L-methionine contacts are provided by residues 234-240, aspartate 258, arginine 263, and aspartate 305; that span reads CAAPGNK. Cysteine 359 acts as the Nucleophile in catalysis.

This sequence belongs to the class I-like SAM-binding methyltransferase superfamily. RsmB/NOP family. In terms of tissue distribution, ubiquitous. Detected in placenta, heart and skeletal muscle.

It is found in the nucleus. It localises to the nucleolus. It catalyses the reaction cytidine(3782) in 28S rRNA + S-adenosyl-L-methionine = 5-methylcytidine(3782) in 28S rRNA + S-adenosyl-L-homocysteine + H(+). Functionally, S-adenosyl-L-methionine-dependent methyltransferase that specifically methylates the C(5) position of cytosine 3782 (m5C3782) in 28S rRNA. m5C3782 promotes protein translation without affecting ribosome biogenesis and fidelity. Required for corpus callosum and cerebral cortex development. This Homo sapiens (Human) protein is 28S rRNA (cytosine-C(5))-methyltransferase.